We begin with the raw amino-acid sequence, 140 residues long: Large ribosomal subunit protein uL16 (140 aa).

The segment at 1-24 (MALAPARTKYRKSQKGSRAGNAKR) is disordered.

Belongs to the universal ribosomal protein uL16 family. In terms of assembly, part of the 50S ribosomal subunit.

Binds 23S rRNA and is also seen to make contacts with the A and possibly P site tRNAs. The polypeptide is Large ribosomal subunit protein uL16 (Opitutus terrae (strain DSM 11246 / JCM 15787 / PB90-1)).